Here is a 443-residue protein sequence, read N- to C-terminus: Tubulin beta-3 chain (443 aa).

Residues Gln-11, Glu-69, Ser-138, Gly-142, Thr-143, Gly-144, Asn-204, and Asn-226 each contribute to the GTP site. Glu-69 is a Mg(2+) binding site.

Belongs to the tubulin family. As to quaternary structure, dimer of alpha and beta chains. A typical microtubule is a hollow water-filled tube with an outer diameter of 25 nm and an inner diameter of 15 nM. Alpha-beta heterodimers associate head-to-tail to form protofilaments running lengthwise along the microtubule wall with the beta-tubulin subunit facing the microtubule plus end conferring a structural polarity. Microtubules usually have 13 protofilaments but different protofilament numbers can be found in some organisms and specialized cells. The cofactor is Mg(2+).

Its subcellular location is the cytoplasm. The protein localises to the cytoskeleton. In terms of biological role, tubulin is the major constituent of microtubules, a cylinder consisting of laterally associated linear protofilaments composed of alpha- and beta-tubulin heterodimers. Microtubules grow by the addition of GTP-tubulin dimers to the microtubule end, where a stabilizing cap forms. Below the cap, tubulin dimers are in GDP-bound state, owing to GTPase activity of alpha-tubulin. The polypeptide is Tubulin beta-3 chain (TUB-3) (Echinococcus multilocularis (Fox tapeworm)).